Consider the following 348-residue polypeptide: Putative 4-hydroxythreonine-4-phosphate dehydrogenase 2 (348 aa).

A divalent metal cation contacts are provided by histidine 180, histidine 224, and histidine 279.

This sequence belongs to the PdxA family. In terms of assembly, homodimer. It depends on Zn(2+) as a cofactor. Requires Mg(2+) as cofactor. Co(2+) is required as a cofactor.

The protein localises to the cytoplasm. The enzyme catalyses 4-(phosphooxy)-L-threonine + NAD(+) = 3-amino-2-oxopropyl phosphate + CO2 + NADH. The protein operates within cofactor biosynthesis; pyridoxine 5'-phosphate biosynthesis; pyridoxine 5'-phosphate from D-erythrose 4-phosphate: step 4/5. Catalyzes the NAD(P)-dependent oxidation of 4-(phosphooxy)-L-threonine (HTP) into 2-amino-3-oxo-4-(phosphooxy)butyric acid which spontaneously decarboxylates to form 3-amino-2-oxopropyl phosphate (AHAP). In Rhizobium meliloti (strain 1021) (Ensifer meliloti), this protein is Putative 4-hydroxythreonine-4-phosphate dehydrogenase 2.